The sequence spans 84 residues: Large ribosomal subunit protein bL27 (84 aa).

The disordered stretch occupies residues 1-22 (MAHKKAGGSTRNGRDSESKRLG).

This sequence belongs to the bacterial ribosomal protein bL27 family.

This Shewanella pealeana (strain ATCC 700345 / ANG-SQ1) protein is Large ribosomal subunit protein bL27.